Reading from the N-terminus, the 211-residue chain is Pyridoxine/pyridoxamine 5'-phosphate oxidase (211 aa).

Substrate-binding positions include 7 to 10 and lysine 65; that span reads RREY. FMN is bound by residues 60 to 65, 75 to 76, arginine 81, lysine 82, and glutamine 104; these read RIVLLK and YT. Tyrosine 122, arginine 126, and serine 130 together coordinate substrate. Residues 139-140 and tryptophan 184 each bind FMN; that span reads QS. A substrate-binding site is contributed by 190-192; sequence RLH. Arginine 194 contributes to the FMN binding site.

It belongs to the pyridoxamine 5'-phosphate oxidase family. Homodimer. Requires FMN as cofactor.

It catalyses the reaction pyridoxamine 5'-phosphate + O2 + H2O = pyridoxal 5'-phosphate + H2O2 + NH4(+). The catalysed reaction is pyridoxine 5'-phosphate + O2 = pyridoxal 5'-phosphate + H2O2. It functions in the pathway cofactor metabolism; pyridoxal 5'-phosphate salvage; pyridoxal 5'-phosphate from pyridoxamine 5'-phosphate: step 1/1. The protein operates within cofactor metabolism; pyridoxal 5'-phosphate salvage; pyridoxal 5'-phosphate from pyridoxine 5'-phosphate: step 1/1. Catalyzes the oxidation of either pyridoxine 5'-phosphate (PNP) or pyridoxamine 5'-phosphate (PMP) into pyridoxal 5'-phosphate (PLP). The sequence is that of Pyridoxine/pyridoxamine 5'-phosphate oxidase from Vibrio cholerae serotype O1 (strain ATCC 39541 / Classical Ogawa 395 / O395).